A 356-amino-acid chain; its full sequence is Histidinol-phosphate aminotransferase (356 aa).

K214 carries the N6-(pyridoxal phosphate)lysine modification.

The protein belongs to the class-II pyridoxal-phosphate-dependent aminotransferase family. Histidinol-phosphate aminotransferase subfamily. In terms of assembly, homodimer. Pyridoxal 5'-phosphate is required as a cofactor.

The catalysed reaction is L-histidinol phosphate + 2-oxoglutarate = 3-(imidazol-4-yl)-2-oxopropyl phosphate + L-glutamate. It functions in the pathway amino-acid biosynthesis; L-histidine biosynthesis; L-histidine from 5-phospho-alpha-D-ribose 1-diphosphate: step 7/9. The polypeptide is Histidinol-phosphate aminotransferase (Escherichia coli (strain 55989 / EAEC)).